The primary structure comprises 319 residues: Pantothenate kinase (319 aa).

An ATP-binding site is contributed by 97–104 (GSVAVGKS).

It belongs to the prokaryotic pantothenate kinase family.

It localises to the cytoplasm. It catalyses the reaction (R)-pantothenate + ATP = (R)-4'-phosphopantothenate + ADP + H(+). It functions in the pathway cofactor biosynthesis; coenzyme A biosynthesis; CoA from (R)-pantothenate: step 1/5. The chain is Pantothenate kinase from Chelativorans sp. (strain BNC1).